We begin with the raw amino-acid sequence, 301 residues long: HTH-type transcriptional regulator EstR (301 aa).

The HTH lysR-type domain maps to 5 to 62 (PSLRQLSYLVTLSETLHFTEAARRSFVTQSTLSGGIMELERLLGGVLVERDRQNVRLT). Residues 22 to 41 (FTEAARRSFVTQSTLSGGIM) constitute a DNA-binding region (H-T-H motif).

It belongs to the LysR transcriptional regulatory family.

Transcriptional regulator of the esterase operon. This chain is HTH-type transcriptional regulator EstR (estR), found in Acinetobacter baylyi (strain ATCC 33305 / BD413 / ADP1).